The primary structure comprises 484 residues: Putative myrosinase 6 (484 aa).

Residue Asn-28 is glycosylated (N-linked (GlcNAc...) asparagine). A beta-D-glucoside contacts are provided by residues Gln-39, His-140, and 184–185 (NQ). A disulfide bridge links Cys-204 with Cys-207. Asn-260 carries N-linked (GlcNAc...) asparagine glycosylation. Residues Tyr-321, Trp-440, 447-448 (EF), and Phe-456 contribute to the a beta-D-glucoside site. Residue Asn-462 is glycosylated (N-linked (GlcNAc...) asparagine).

The protein belongs to the glycosyl hydrolase 1 family.

The enzyme catalyses a thioglucoside + H2O = a sugar + a thiol.. The sequence is that of Putative myrosinase 6 from Arabidopsis thaliana (Mouse-ear cress).